The following is a 277-amino-acid chain: MIRNQANKPGRAKAATAARKSPLTKSAAKPAAASGAGAKLGKGVIAVALPSFRRERALLKQGIWPVAGCDEAGRGPLAGPVVAAAVILDPNRIPKGLDDSKRLSAEQREALFDKICKTSAFAVAYASPTRIDRDNILRASLWALSRAVRALPEAPKHVFVDGRDRIDVDCNCEAVIGGDGLVMSIAAASIVAKVTRDRLMCALAQDCPGYGFEQHKGYAVPEHLAALDRLGPSVHHRSLFAPVVAARRKHQPWTDVPEPDLFAEVTVVTSTEISLEA.

The interval 1–32 is disordered; the sequence is MIRNQANKPGRAKAATAARKSPLTKSAAKPAA. Low complexity predominate over residues 20 to 32; it reads KSPLTKSAAKPAA. The 189-residue stretch at 64–252 folds into the RNase H type-2 domain; that stretch reads WPVAGCDEAG…VVAARRKHQP (189 aa). Asp-70, Glu-71, and Asp-161 together coordinate a divalent metal cation.

The protein belongs to the RNase HII family. Mn(2+) is required as a cofactor. The cofactor is Mg(2+).

The protein localises to the cytoplasm. The catalysed reaction is Endonucleolytic cleavage to 5'-phosphomonoester.. Endonuclease that specifically degrades the RNA of RNA-DNA hybrids. This chain is Ribonuclease HII, found in Bradyrhizobium sp. (strain ORS 278).